The following is a 367-amino-acid chain: Beta sliding clamp (367 aa).

Belongs to the beta sliding clamp family. As to quaternary structure, forms a ring-shaped head-to-tail homodimer around DNA which binds and tethers DNA polymerases and other proteins to the DNA. The DNA replisome complex has a single clamp-loading complex (3 tau and 1 each of delta, delta', psi and chi subunits) which binds 3 Pol III cores (1 core on the leading strand and 2 on the lagging strand) each with a beta sliding clamp dimer. Additional proteins in the replisome are other copies of gamma, psi and chi, Ssb, DNA helicase and RNA primase.

The protein resides in the cytoplasm. Functionally, confers DNA tethering and processivity to DNA polymerases and other proteins. Acts as a clamp, forming a ring around DNA (a reaction catalyzed by the clamp-loading complex) which diffuses in an ATP-independent manner freely and bidirectionally along dsDNA. Initially characterized for its ability to contact the catalytic subunit of DNA polymerase III (Pol III), a complex, multichain enzyme responsible for most of the replicative synthesis in bacteria; Pol III exhibits 3'-5' exonuclease proofreading activity. The beta chain is required for initiation of replication as well as for processivity of DNA replication. This chain is Beta sliding clamp (dnaN), found in Pseudomonas aeruginosa (strain ATCC 15692 / DSM 22644 / CIP 104116 / JCM 14847 / LMG 12228 / 1C / PRS 101 / PAO1).